Here is an 80-residue protein sequence, read N- to C-terminus: NADH-ubiquinone oxidoreductase chain 5 (80 aa).

Helical transmembrane passes span 4 to 24 (ISFLVLVSISFSMFLLSLNFM) and 44 to 64 (IVMTFLFDWMSLLFMSFVLLI).

This sequence belongs to the complex I subunit 5 family.

Its subcellular location is the mitochondrion inner membrane. It catalyses the reaction a ubiquinone + NADH + 5 H(+)(in) = a ubiquinol + NAD(+) + 4 H(+)(out). Functionally, core subunit of the mitochondrial membrane respiratory chain NADH dehydrogenase (Complex I) that is believed to belong to the minimal assembly required for catalysis. Complex I functions in the transfer of electrons from NADH to the respiratory chain. The immediate electron acceptor for the enzyme is believed to be ubiquinone. This is NADH-ubiquinone oxidoreductase chain 5 (ND5) from Ceratitis capitata (Mediterranean fruit fly).